A 169-amino-acid chain; its full sequence is Large ribosomal subunit protein uL10 (169 aa).

The protein belongs to the universal ribosomal protein uL10 family. In terms of assembly, part of the ribosomal stalk of the 50S ribosomal subunit. The N-terminus interacts with L11 and the large rRNA to form the base of the stalk. The C-terminus forms an elongated spine to which L12 dimers bind in a sequential fashion forming a multimeric L10(L12)X complex.

In terms of biological role, forms part of the ribosomal stalk, playing a central role in the interaction of the ribosome with GTP-bound translation factors. The polypeptide is Large ribosomal subunit protein uL10 (Rickettsia bellii (strain OSU 85-389)).